The following is an 89-amino-acid chain: Small ribosomal subunit protein uS15 (89 aa).

It belongs to the universal ribosomal protein uS15 family. In terms of assembly, part of the 30S ribosomal subunit. Forms a bridge to the 50S subunit in the 70S ribosome, contacting the 23S rRNA.

In terms of biological role, one of the primary rRNA binding proteins, it binds directly to 16S rRNA where it helps nucleate assembly of the platform of the 30S subunit by binding and bridging several RNA helices of the 16S rRNA. Its function is as follows. Forms an intersubunit bridge (bridge B4) with the 23S rRNA of the 50S subunit in the ribosome. In Ralstonia nicotianae (strain ATCC BAA-1114 / GMI1000) (Ralstonia solanacearum), this protein is Small ribosomal subunit protein uS15.